A 173-amino-acid polypeptide reads, in one-letter code: Alpha-crystallin A chain (173 aa).

Met1 carries the N-acetylmethionine modification. The 111-residue stretch at 52-162 (LFRTVLESGI…SHNERPIPVS (111 aa)) folds into the sHSP domain. His100, Glu102, His107, and His154 together coordinate Zn(2+). A disordered region spans residues 144–173 (PKVQSNTDPSHNERPIPVSREEKPTSAPPS). Over residues 153–167 (SHNERPIPVSREEKP) the composition is skewed to basic and acidic residues. Ser162 carries an O-linked (GlcNAc) serine glycan.

The protein belongs to the small heat shock protein (HSP20) family. As to quaternary structure, heteropolymer composed of three CRYAA and one CRYAB subunits. Inter-subunit bridging via zinc ions enhances stability, which is crucial as there is no protein turn over in the lens. Can also form homodimers and homotetramers (dimers of dimers) which serve as the building blocks of homooligomers. Within homooligomers, the zinc-binding motif is created from residues of 3 different molecules. His-100 and Glu-102 from one molecule are ligands of the zinc ion, and His-107 and His-154 residues from additional molecules complete the site with tetrahedral coordination geometry.

Its subcellular location is the cytoplasm. The protein localises to the nucleus. Functionally, contributes to the transparency and refractive index of the lens. May act as a chaperone, preventing aggregation of various proteins under a wide range of stress conditions. In Tupinambis teguixin (Golden tegu), this protein is Alpha-crystallin A chain (CRYAA).